The sequence spans 255 residues: HLA class II histocompatibility antigen, DQ alpha 2 chain (255 aa).

A signal peptide spans 1-23; it reads MILNKALLLGALALTAVMSPCGG. Positions 24–110 are alpha-1; that stretch reads EDIVADHVAS…RQSNSTAATN (87 aa). The Extracellular segment spans residues 24–217; it reads EDIVADHVAS…IPAPMSELTE (194 aa). Residues Asn-104 and Asn-144 are each glycosylated (N-linked (GlcNAc...) asparagine). Residues 111–204 form an alpha-2 region; that stretch reads EVPEVTVFSK…GLDEPLLKHW (94 aa). The region spanning 113 to 205 is the Ig-like C1-type domain; sequence PEVTVFSKFP…LDEPLLKHWE (93 aa). A disulfide bridge links Cys-133 with Cys-189. Residues 205-217 are connecting peptide; it reads EPEIPAPMSELTE. Residues 218–240 traverse the membrane as a helical segment; that stretch reads TLVCALGLSVGLMGIVVGTVFII. Residues 241–255 are Cytoplasmic-facing; sequence QGLRSVGASRHQGLL.

Belongs to the MHC class II family. In terms of assembly, heterodimer of an alpha and a beta subunit; also referred as MHC class II molecule. Dimer formation with HLA-DQB2, but not with HLA-DQB1, is required for efficient exit from the endoplasmic reticulum (ER). In the ER, forms a heterononamer; 3 MHC class II molecules bind to a CD74 homotrimer (also known as invariant chain or HLA class II histocompatibility antigen gamma chain). In the endosomal/lysosomal system; CD74 undergoes sequential degradation by various proteases; leaving a small fragment termed CLIP on each MHC class II molecule. MHC class II molecule interacts with HLA_DM, and HLA_DO in B-cells, in order to release CLIP and facilitate the binding of antigenic peptides. Association with HLA-DMA also occurs in skin Langerhans cells, in post-Golgi compartments. As to expression, restricted to skin Langerhans cells, although some expression at low levels may occur at the surface of B lymphoblastoid cells.

Its subcellular location is the cell membrane. The protein localises to the endoplasmic reticulum membrane. The protein resides in the golgi apparatus. It localises to the trans-Golgi network membrane. It is found in the endosome membrane. Its subcellular location is the lysosome membrane. Binds peptides derived from antigens that access the endocytic route of antigen presenting cells (APC) and presents them on the cell surface for recognition by the CD4 T-cells. The peptide binding cleft accommodates peptides of 10-30 residues. The peptides presented by MHC class II molecules are generated mostly by degradation of proteins that access the endocytic route, where they are processed by lysosomal proteases and other hydrolases. Exogenous antigens that have been endocytosed by the APC are thus readily available for presentation via MHC II molecules, and for this reason this antigen presentation pathway is usually referred to as exogenous. As membrane proteins on their way to degradation in lysosomes as part of their normal turn-over are also contained in the endosomal/lysosomal compartments, exogenous antigens must compete with those derived from endogenous components. Autophagy is also a source of endogenous peptides, autophagosomes constitutively fuse with MHC class II loading compartments. In addition to APCs, other cells of the gastrointestinal tract, such as epithelial cells, express MHC class II molecules and CD74 and act as APCs, which is an unusual trait of the GI tract. To produce a MHC class II molecule that presents an antigen, three MHC class II molecules (heterodimers of an alpha and a beta chain) associate with a CD74 trimer in the ER to form a heterononamer. Soon after the entry of this complex into the endosomal/lysosomal system where antigen processing occurs, CD74 undergoes a sequential degradation by various proteases, including CTSS and CTSL, leaving a small fragment termed CLIP (class-II-associated invariant chain peptide). The removal of CLIP is facilitated by HLA-DM via direct binding to the alpha-beta-CLIP complex so that CLIP is released. HLA-DM stabilizes MHC class II molecules until primary high affinity antigenic peptides are bound. The MHC II molecule bound to a peptide is then transported to the cell membrane surface. In B-cells, the interaction between HLA-DM and MHC class II molecules is regulated by HLA-DO. Primary dendritic cells (DCs) also to express HLA-DO. Lysosomal microenvironment has been implicated in the regulation of antigen loading into MHC II molecules, increased acidification produces increased proteolysis and efficient peptide loading. This Homo sapiens (Human) protein is HLA class II histocompatibility antigen, DQ alpha 2 chain (HLA-DQA2).